We begin with the raw amino-acid sequence, 84 residues long: Esculentin-1SIa (84 aa).

The N-terminal stretch at 1 to 22 (MFTLKKPLLLIVLLGIISLSLC) is a signal peptide. A propeptide spans 23–36 (EQERAADEDEGSEI) (removed in mature form). Cys78 and Cys84 form a disulfide bridge.

Expressed by the skin glands.

It localises to the secreted. Has antimicrobial activity against Gram-negative bacterium E.coli ATCC 8739 (MIC=6.3 ug), against Gram positive bacteria S.aureus ATCC 6538 (MIC=3.1 ug), methicillin-resistant S.aureus ATCC 43300 (MIC=25 ug) and B.subtilis ATCC 6633 (MIC=25 ug). Has no activity against fungus C.albicans ATCC 90028. The chain is Esculentin-1SIa from Odorrana ishikawae (Ishikawa's frog).